The chain runs to 401 residues: Tyrosine--tRNA ligase (401 aa).

The short motif at 43 to 52 is the 'HIGH' region element; sequence PTAPDLHLGH. The 'KMSKS' region motif lies at 227–231; it reads KMSKS. Position 230 (K230) interacts with ATP. In terms of domain architecture, S4 RNA-binding spans 338 to 399; that stretch reads MAIGNVLKEA…GKRRFAKINL (62 aa).

The protein belongs to the class-I aminoacyl-tRNA synthetase family. TyrS type 2 subfamily. In terms of assembly, homodimer.

The protein resides in the cytoplasm. It carries out the reaction tRNA(Tyr) + L-tyrosine + ATP = L-tyrosyl-tRNA(Tyr) + AMP + diphosphate + H(+). Functionally, catalyzes the attachment of tyrosine to tRNA(Tyr) in a two-step reaction: tyrosine is first activated by ATP to form Tyr-AMP and then transferred to the acceptor end of tRNA(Tyr). This Idiomarina loihiensis (strain ATCC BAA-735 / DSM 15497 / L2-TR) protein is Tyrosine--tRNA ligase.